The chain runs to 182 residues: Large ribosomal subunit protein uL6 (182 aa).

It belongs to the universal ribosomal protein uL6 family. As to quaternary structure, part of the 50S ribosomal subunit.

Functionally, this protein binds to the 23S rRNA, and is important in its secondary structure. It is located near the subunit interface in the base of the L7/L12 stalk, and near the tRNA binding site of the peptidyltransferase center. The chain is Large ribosomal subunit protein uL6 from Desulforamulus reducens (strain ATCC BAA-1160 / DSM 100696 / MI-1) (Desulfotomaculum reducens).